Consider the following 376-residue polypeptide: Probable cysteine protease RDL3 (376 aa).

The signal sequence occupies residues 1–27; that stretch reads MAISFRTLALLTLSVLLISISLGVVTA. The propeptide at 28 to 126 is activation peptide; that stretch reads TESQRNEGEV…ERYQYKEGDV (99 aa). An N-linked (GlcNAc...) asparagine glycan is attached at Asn80. 2 cysteine pairs are disulfide-bonded: Cys149/Cys192 and Cys183/Cys226. The active site involves Cys152. N-linked (GlcNAc...) asparagine glycosylation is present at Asn270. A disulfide bridge connects residues Cys283 and Cys336. Active-site residues include His290 and Asn311. Residue Asn349 is glycosylated (N-linked (GlcNAc...) asparagine).

Belongs to the peptidase C1 family. Expressed in root hairs.

Functionally, probable thiol protease. The polypeptide is Probable cysteine protease RDL3 (Arabidopsis thaliana (Mouse-ear cress)).